A 318-amino-acid polypeptide reads, in one-letter code: Peroxisomal and mitochondrial division factor 1 (318 aa).

A disordered region spans residues 1 to 39; sequence MADVEDRAAKGISDYDQGGVKTTELERKIEDMENKNQEL. Topologically, residues 1–291 are cytoplasmic; that stretch reads MADVEDRAAK…QKGSLEAEYQ (291 aa). Residues 19-260 are a coiled coil; it reads GVKTTELERK…KKVEEGNKTV (242 aa). Residues 23-39 show a composition bias toward basic and acidic residues; that stretch reads TELERKIEDMENKNQEL. A helical transmembrane segment spans residues 292–312; it reads WPVVAAGSVGAAGLVAATFFV. The Mitochondrial intermembrane portion of the chain corresponds to 313-318; that stretch reads CYSKLR.

In terms of assembly, homodimer. Interacts with PMD2.

The protein localises to the peroxisome membrane. It localises to the mitochondrion outer membrane. Its function is as follows. Involved in morphogenesis and proliferation of peroxisomes and mitochondria, independently from the previously defined pathway controlled by the FIS1-DRP3 complex. This is Peroxisomal and mitochondrial division factor 1 from Arabidopsis thaliana (Mouse-ear cress).